Here is a 555-residue protein sequence, read N- to C-terminus: CTP synthase (555 aa).

Residues 1 to 279 are amidoligase domain; that stretch reads MATNRAKSST…DNYIIRRLNL (279 aa). Residue Ser21 coordinates CTP. Ser21 serves as a coordination point for UTP. Residues 22–27 and Asp79 contribute to the ATP site; that span reads SLGKGL. Residues Asp79 and Glu153 each coordinate Mg(2+). Residues 160 to 162, 200 to 205, and Lys236 contribute to the CTP site; these read DIE and KTKPTQ. UTP contacts are provided by residues 200 to 205 and Lys236; that span reads KTKPTQ. The Glutamine amidotransferase type-1 domain occupies 304-553; that stretch reads TIGIVGKYID…VDAALKHQAG (250 aa). L-glutamine is bound at residue Gly367. The active-site Nucleophile; for glutamine hydrolysis is the Cys394. L-glutamine contacts are provided by residues 395–398, Glu417, and Arg478; that span reads LGLQ. Catalysis depends on residues His526 and Glu528.

The protein belongs to the CTP synthase family. Homotetramer.

The catalysed reaction is UTP + L-glutamine + ATP + H2O = CTP + L-glutamate + ADP + phosphate + 2 H(+). It carries out the reaction L-glutamine + H2O = L-glutamate + NH4(+). It catalyses the reaction UTP + NH4(+) + ATP = CTP + ADP + phosphate + 2 H(+). The protein operates within pyrimidine metabolism; CTP biosynthesis via de novo pathway; CTP from UDP: step 2/2. With respect to regulation, allosterically activated by GTP, when glutamine is the substrate; GTP has no effect on the reaction when ammonia is the substrate. The allosteric effector GTP functions by stabilizing the protein conformation that binds the tetrahedral intermediate(s) formed during glutamine hydrolysis. Inhibited by the product CTP, via allosteric rather than competitive inhibition. Functionally, catalyzes the ATP-dependent amination of UTP to CTP with either L-glutamine or ammonia as the source of nitrogen. Regulates intracellular CTP levels through interactions with the four ribonucleotide triphosphates. This chain is CTP synthase, found in Corynebacterium jeikeium (strain K411).